A 322-amino-acid polypeptide reads, in one-letter code: 2-methylene-furan-3-one reductase (322 aa).

NADP(+) is bound by residues Lys59, Gly174–Val175, Ser197–Lys200, Tyr215, Ile253, Phe264–Leu266, and Arg311–Ala312. Lys59 contributes to the substrate binding site.

Belongs to the zinc-containing alcohol dehydrogenase family. Quinone oxidoreductase subfamily. In terms of assembly, monomer.

The catalysed reaction is 4-hydroxy-2,5-dimethyl-furan-3(2H)-one + NADP(+) = 4-hydroxy-5-methyl-2-methylenefuran-3(2H)-one + NADPH + H(+). Enone oxidoreductase involved in the biosynthesis of 4-hydroxy-2,5-dimethyl-3(2H)-furanone (HDMF or furaneol), the key flavor compound in strawberries. The protein is 2-methylene-furan-3-one reductase (EO) of Fragaria vesca (Woodland strawberry).